Consider the following 160-residue polypeptide: UPF0178 protein PA5247 (160 aa).

Belongs to the UPF0178 family.

The protein is UPF0178 protein PA5247 of Pseudomonas aeruginosa (strain ATCC 15692 / DSM 22644 / CIP 104116 / JCM 14847 / LMG 12228 / 1C / PRS 101 / PAO1).